Consider the following 170-residue polypeptide: Ergosterol biosynthetic protein 28 (170 aa).

3 helical membrane passes run 7 to 27, 116 to 136, and 141 to 161; these read FLPE…IISI, TLAY…LFVF, and FGLP…WMPL.

The protein belongs to the ERG28 family. As to quaternary structure, heterotetramer of ERG25, ERG26, ERG27 and ERG28. ERG28 acts as a scaffold to tether ERG27 and other 4,4-demethylation-related enzymes, forming a demethylation enzyme complex, in the endoplasmic reticulum.

The protein localises to the endoplasmic reticulum membrane. It participates in steroid metabolism; ergosterol biosynthesis. Sterol 24-C-methyltransferase; part of the third module of ergosterol biosynthesis pathway that includes the late steps of the pathway. ERG28 has a role as a scaffold to help anchor the catalytic components of the C-4 demethylation complex ERG25, ERG26 and ERG27 to the endoplasmic reticulum. The third module or late pathway involves the ergosterol synthesis itself through consecutive reactions that mainly occur in the endoplasmic reticulum (ER) membrane. Firstly, the squalene synthase ERG9 catalyzes the condensation of 2 farnesyl pyrophosphate moieties to form squalene, which is the precursor of all steroids. Squalene synthase is crucial for balancing the incorporation of farnesyl diphosphate (FPP) into sterol and nonsterol isoprene synthesis. Secondly, squalene is converted into lanosterol by the consecutive action of the squalene epoxidase ERG1 and the lanosterol synthase ERG7. Then, the delta(24)-sterol C-methyltransferase ERG6 methylates lanosterol at C-24 to produce eburicol. Eburicol is the substrate of the sterol 14-alpha demethylase encoded by CYP51A, CYP51B and CYP51C, to yield 4,4,24-trimethyl ergosta-8,14,24(28)-trienol. CYP51B encodes the enzyme primarily responsible for sterol 14-alpha-demethylation, and plays an essential role in ascospore formation. CYP51A encodes an additional sterol 14-alpha-demethylase, induced on ergosterol depletion and responsible for the intrinsic variation in azole sensitivity. The third CYP51 isoform, CYP51C, does not encode a sterol 14-alpha-demethylase, but is required for full virulence on host wheat ears. The C-14 reductase ERG24 then reduces the C14=C15 double bond which leads to 4,4-dimethylfecosterol. A sequence of further demethylations at C-4, involving the C-4 demethylation complex containing the C-4 methylsterol oxidases ERG25, the sterol-4-alpha-carboxylate 3-dehydrogenase ERG26 and the 3-keto-steroid reductase ERG27, leads to the production of fecosterol via 4-methylfecosterol. ERG28 has a role as a scaffold to help anchor ERG25, ERG26 and ERG27 to the endoplasmic reticulum. The C-8 sterol isomerase ERG2 then catalyzes the reaction which results in unsaturation at C-7 in the B ring of sterols and thus converts fecosterol to episterol. The sterol-C5-desaturases ERG3A and ERG3BB then catalyze the introduction of a C-5 double bond in the B ring to produce 5-dehydroepisterol. The C-22 sterol desaturases ERG5A and ERG5B further convert 5-dehydroepisterol into ergosta-5,7,22,24(28)-tetraen-3beta-ol by forming the C-22(23) double bond in the sterol side chain. Finally, ergosta-5,7,22,24(28)-tetraen-3beta-ol is substrate of the C-24(28) sterol reductase ERG4 to produce ergosterol. In Gibberella zeae (strain ATCC MYA-4620 / CBS 123657 / FGSC 9075 / NRRL 31084 / PH-1) (Wheat head blight fungus), this protein is Ergosterol biosynthetic protein 28.